A 568-amino-acid polypeptide reads, in one-letter code: Potassium-transporting ATPase potassium-binding subunit (568 aa).

10 consecutive transmembrane segments (helical) span residues 3-23, 68-88, 133-153, 180-200, 256-276, 281-301, 375-395, 421-441, 497-517, and 535-555; these read TEVLGVIAQIVLMVVLSYPLG, LLVVNLFWFLWGMVLLVTQGV, FVIMLFQFITAATGMAAMAGI, LLPLSLVVGFILIVQGTPMGF, VECWSILIIPMAMAFAFGFYL, LGYSIYGVMLFAYLVGVCINV, FGGVGVGWMNYFTFIIIAVFI, IVALLHPFIILVGTALAAYLF, IVLILGRFVPIVGQVAIAGIL, and VTFGVMTFAVIFIVAALSFFP.

It belongs to the KdpA family. The system is composed of three essential subunits: KdpA, KdpB and KdpC.

Its subcellular location is the cell inner membrane. In terms of biological role, part of the high-affinity ATP-driven potassium transport (or Kdp) system, which catalyzes the hydrolysis of ATP coupled with the electrogenic transport of potassium into the cytoplasm. This subunit binds the periplasmic potassium ions and delivers the ions to the membrane domain of KdpB through an intramembrane tunnel. The sequence is that of Potassium-transporting ATPase potassium-binding subunit from Phocaeicola vulgatus (strain ATCC 8482 / DSM 1447 / JCM 5826 / CCUG 4940 / NBRC 14291 / NCTC 11154) (Bacteroides vulgatus).